A 662-amino-acid chain; its full sequence is Threonine--tRNA ligase (662 aa).

In terms of domain architecture, TGS spans 1–64; sequence MSQSVSLTFP…ADGKIEIITR (64 aa). The segment at 245–547 is catalytic; the sequence is DHRRLGREMD…LIENFAGHMP (303 aa). Positions 341, 392, and 524 each coordinate Zn(2+).

This sequence belongs to the class-II aminoacyl-tRNA synthetase family. In terms of assembly, homodimer. It depends on Zn(2+) as a cofactor.

Its subcellular location is the cytoplasm. It catalyses the reaction tRNA(Thr) + L-threonine + ATP = L-threonyl-tRNA(Thr) + AMP + diphosphate + H(+). In terms of biological role, catalyzes the attachment of threonine to tRNA(Thr) in a two-step reaction: L-threonine is first activated by ATP to form Thr-AMP and then transferred to the acceptor end of tRNA(Thr). Also edits incorrectly charged L-seryl-tRNA(Thr). This chain is Threonine--tRNA ligase, found in Rhizobium rhizogenes (strain K84 / ATCC BAA-868) (Agrobacterium radiobacter).